The chain runs to 440 residues: tRNA-2-methylthio-N(6)-dimethylallyladenosine synthase (440 aa).

The 117-residue stretch at P2–G118 folds into the MTTase N-terminal domain. [4Fe-4S] cluster is bound by residues C11, C47, C81, C155, C159, and C162. Residues R141–E370 enclose the Radical SAM core domain. Residues L373 to R436 enclose the TRAM domain.

This sequence belongs to the methylthiotransferase family. MiaB subfamily. As to quaternary structure, monomer. Requires [4Fe-4S] cluster as cofactor.

It localises to the cytoplasm. The enzyme catalyses N(6)-dimethylallyladenosine(37) in tRNA + (sulfur carrier)-SH + AH2 + 2 S-adenosyl-L-methionine = 2-methylsulfanyl-N(6)-dimethylallyladenosine(37) in tRNA + (sulfur carrier)-H + 5'-deoxyadenosine + L-methionine + A + S-adenosyl-L-homocysteine + 2 H(+). Functionally, catalyzes the methylthiolation of N6-(dimethylallyl)adenosine (i(6)A), leading to the formation of 2-methylthio-N6-(dimethylallyl)adenosine (ms(2)i(6)A) at position 37 in tRNAs that read codons beginning with uridine. This Dictyoglomus thermophilum (strain ATCC 35947 / DSM 3960 / H-6-12) protein is tRNA-2-methylthio-N(6)-dimethylallyladenosine synthase.